The primary structure comprises 303 residues: RING finger protein 148 (303 aa).

The N-terminal stretch at 1–34 (MSLLRITSSAHSSASSRLWRLGIFLLLSLPDSKG) is a signal peptide. Asparagine 43 carries N-linked (GlcNAc...) asparagine glycosylation. Residues 65-167 (HSPLERVSGV…LKGMELLHLI (103 aa)) enclose the PA domain. A helical membrane pass occupies residues 186-208 (WLSHYIMSLFTFLTATVAYLFLY). An RING-type; atypical zinc finger spans residues 256–297 (CVVCFDIYKPQDVVRILTCKHIFHKACIDPWLLAHRTCPMCK).

It localises to the membrane. The protein is RING finger protein 148 (RNF148) of Bos taurus (Bovine).